Consider the following 269-residue polypeptide: Formamidopyrimidine-DNA glycosylase (269 aa).

Pro-2 functions as the Schiff-base intermediate with DNA in the catalytic mechanism. The Proton donor role is filled by Glu-3. Residue Lys-57 is the Proton donor; for beta-elimination activity of the active site. DNA contacts are provided by His-90, Arg-109, and Lys-150. Residues 235–269 (QVYGRAGEPCRQCGHPIEIAKHGQRSTFFCRHCQH) form an FPG-type zinc finger. Arg-259 acts as the Proton donor; for delta-elimination activity in catalysis.

The protein belongs to the FPG family. As to quaternary structure, monomer. Zn(2+) serves as cofactor.

The enzyme catalyses Hydrolysis of DNA containing ring-opened 7-methylguanine residues, releasing 2,6-diamino-4-hydroxy-5-(N-methyl)formamidopyrimidine.. It carries out the reaction 2'-deoxyribonucleotide-(2'-deoxyribose 5'-phosphate)-2'-deoxyribonucleotide-DNA = a 3'-end 2'-deoxyribonucleotide-(2,3-dehydro-2,3-deoxyribose 5'-phosphate)-DNA + a 5'-end 5'-phospho-2'-deoxyribonucleoside-DNA + H(+). Involved in base excision repair of DNA damaged by oxidation or by mutagenic agents. Acts as a DNA glycosylase that recognizes and removes damaged bases. Has a preference for oxidized purines, such as 7,8-dihydro-8-oxoguanine (8-oxoG). Has AP (apurinic/apyrimidinic) lyase activity and introduces nicks in the DNA strand. Cleaves the DNA backbone by beta-delta elimination to generate a single-strand break at the site of the removed base with both 3'- and 5'-phosphates. The sequence is that of Formamidopyrimidine-DNA glycosylase from Yersinia pseudotuberculosis serotype O:1b (strain IP 31758).